We begin with the raw amino-acid sequence, 629 residues long: Probable potassium transport system protein Kup 3 (629 aa).

The next 12 helical transmembrane spans lie at L20–F40, V61–L81, P106–T126, P143–I163, I171–A191, F212–T232, W253–L273, F291–I311, I343–F363, A372–L392, I400–A420, and F425–I445.

It belongs to the HAK/KUP transporter (TC 2.A.72) family.

It is found in the cell inner membrane. The enzyme catalyses K(+)(in) + H(+)(in) = K(+)(out) + H(+)(out). Transport of potassium into the cell. Likely operates as a K(+):H(+) symporter. The protein is Probable potassium transport system protein Kup 3 of Legionella pneumophila (strain Lens).